A 506-amino-acid polypeptide reads, in one-letter code: Sucrose transport protein SUT3 (506 aa).

Residues 1–20 (MAVDMELDGGGDGKGKAPPQ) are Cytoplasmic-facing. A helical membrane pass occupies residues 21–41 (ISLSGLFLACMVAGGVQYGWA). The Extracellular portion of the chain corresponds to 42–54 (LQLSLLTPYIQTL). Residues 55-75 (GIPHALTSVMWLCGPIAGLIV) traverse the membrane as a helical segment. Over 76 to 94 (QPCVGLYSDKCTSSLGRRR) the chain is Cytoplasmic. The helical transmembrane segment at 95–115 (PFILTGCIIICISVIVIGFSS) threads the bilayer. The Extracellular segment spans residues 116–135 (DIGYALGDATEDCKVYRGPR). The chain crosses the membrane as a helical span at residues 136–156 (YHAAAAFILGFWLLDFSNNTV). At 157–171 (QGPARALMADLSGRH) the chain is on the cytoplasmic side. The chain crosses the membrane as a helical span at residues 172–192 (GPSAANAIFCSWMALGNILGY). Over 193-220 (SSGSTNDWHKWFPFLMTRACCEACANLK) the chain is Extracellular. The chain crosses the membrane as a helical span at residues 221-241 (AAFLVAVVFLGLSTAVTMVFA). At 242–275 (REVALDPVAAAKRNEGEASGPLAVFKGMKNLPVG) the chain is on the cytoplasmic side. The chain crosses the membrane as a helical span at residues 276–296 (MPSVLIVTGLTWLSWFPFILF). The Extracellular segment spans residues 297–327 (DTDWMGREIYHGRPDGSPAEVTAFQEGVRQG). Residues 328–348 (AFGLLLNSIVLGISSFLIEPM) form a helical membrane-spanning segment. Residues 349 to 355 (CRRLGAR) are Cytoplasmic-facing. Residues 356–376 (AVWVMSSAVVCVAMAAVSVLS) traverse the membrane as a helical segment. Residues 377-404 (AWSLGDFGGSVQDAARAPAEEGGVRASA) are Extracellular-facing. Residues 405–425 (LALFVFLGLPFAVLCSVPFAV) traverse the membrane as a helical segment. The Cytoplasmic portion of the chain corresponds to 426 to 441 (TAQLTASRGGGQGLCT). The chain crosses the membrane as a helical span at residues 442–462 (GVLNISIVVPQMAIALGAGPW). The Extracellular portion of the chain corresponds to 463–470 (DELFGEGN). The chain crosses the membrane as a helical span at residues 471–491 (IPAFAMASVFAAAAAAAGVVL). Topologically, residues 492–506 (LPKVSVRSVSMAGGH) are cytoplasmic.

This sequence belongs to the glycoside-pentoside-hexuronide (GPH) cation symporter transporter (TC 2.A.2.4) family. In terms of assembly, homodimer.

The protein localises to the cell membrane. It functions in the pathway glycan biosynthesis; sucrose metabolism. Its function is as follows. Responsible for the transport of sucrose into the cell, with the concomitant uptake of protons (symport system). May also transport other glucosides. In Oryza sativa subsp. indica (Rice), this protein is Sucrose transport protein SUT3 (SUT3).